Reading from the N-terminus, the 448-residue chain is CCA-adding enzyme (448 aa).

ATP is bound by residues serine 52 and lysine 55. Positions 52 and 55 each coordinate CTP. Positions 64, 66, and 118 each coordinate Mg(2+). ATP is bound by residues histidine 141, lysine 160, and tyrosine 169. The CTP site is built by histidine 141, lysine 160, and tyrosine 169.

Belongs to the tRNA nucleotidyltransferase/poly(A) polymerase family. Archaeal CCA-adding enzyme subfamily. As to quaternary structure, homodimer. Mg(2+) serves as cofactor.

It catalyses the reaction a tRNA precursor + 2 CTP + ATP = a tRNA with a 3' CCA end + 3 diphosphate. It carries out the reaction a tRNA with a 3' CCA end + 2 CTP + ATP = a tRNA with a 3' CCACCA end + 3 diphosphate. Catalyzes the addition and repair of the essential 3'-terminal CCA sequence in tRNAs without using a nucleic acid template. Adds these three nucleotides in the order of C, C, and A to the tRNA nucleotide-73, using CTP and ATP as substrates and producing inorganic pyrophosphate. tRNA 3'-terminal CCA addition is required both for tRNA processing and repair. Also involved in tRNA surveillance by mediating tandem CCA addition to generate a CCACCA at the 3' terminus of unstable tRNAs. While stable tRNAs receive only 3'-terminal CCA, unstable tRNAs are marked with CCACCA and rapidly degraded. The chain is CCA-adding enzyme from Pyrococcus abyssi (strain GE5 / Orsay).